A 147-amino-acid polypeptide reads, in one-letter code: uncharacterized protein (147 aa).

This is an uncharacterized protein from Mycobacterium tuberculosis (strain CDC 1551 / Oshkosh).